The following is a 632-amino-acid chain: tRNA-guanine(15) transglycosylase (632 aa).

Asp86 serves as the catalytic Nucleophile. Residues Asp121 and Gly186 each contribute to the substrate site. Residues 553–628 enclose the PUA domain; that stretch reads AMRVTVSKES…IAVKVHEGRD (76 aa).

It belongs to the archaeosine tRNA-ribosyltransferase family. Zn(2+) is required as a cofactor.

The catalysed reaction is guanosine(15) in tRNA + 7-cyano-7-deazaguanine = 7-cyano-7-carbaguanosine(15) in tRNA + guanine. Its pathway is tRNA modification; archaeosine-tRNA biosynthesis. Its function is as follows. Exchanges the guanine residue with 7-cyano-7-deazaguanine (preQ0) at position 15 in the dihydrouridine loop (D-loop) of archaeal tRNAs. The sequence is that of tRNA-guanine(15) transglycosylase from Thermoplasma acidophilum (strain ATCC 25905 / DSM 1728 / JCM 9062 / NBRC 15155 / AMRC-C165).